Reading from the N-terminus, the 950-residue chain is Lon protease homolog, mitochondrial (950 aa).

A mitochondrion-targeting transit peptide spans 1 to 65 (MAASTGYVRL…VPMGGGQWRG (65 aa)). Disordered stretches follow at residues 67–94 (WDAG…SGEG) and 212–243 (PEGL…LGAK). A Lon N-terminal domain is found at 112-360 (LPLIAISRNP…KALSLLKKEF (249 aa)). The segment covering 224–233 (KSRRKLKRGK) has biased composition (basic residues). 513-520 (GPPGVGKT) provides a ligand contact to ATP. In terms of domain architecture, Lon proteolytic spans 749–939 (VTPPGVVMGL…RDIFRIAFPL (191 aa)). Catalysis depends on residues serine 845 and lysine 888.

This sequence belongs to the peptidase S16 family. Homohexamer. Organized in a ring with a central cavity. The ATP-binding and proteolytic domains (AP-domain) form a hexameric chamber, while the N-terminal domain is arranged as a trimer of dimers. DNA and RNA binding is stimulated by substrate and inhibited by ATP binding. Interacts with TWNK and mitochondrial DNA polymerase subunit POLG.

The protein localises to the mitochondrion matrix. The enzyme catalyses Hydrolysis of proteins in presence of ATP.. Functionally, ATP-dependent serine protease that mediates the selective degradation of misfolded, unassembled or oxidatively damaged polypeptides as well as certain short-lived regulatory proteins in the mitochondrial matrix. Endogenous substrates include mitochondrial steroidogenic acute regulatory (StAR) protein, DELE1, helicase Twinkle (TWNK) and the large ribosomal subunit protein MRPL32/bL32m. MRPL32/bL32m is protected from degradation by LONP1 when it is bound to a nucleic acid (RNA), but TWNK is not. May also have a chaperone function in the assembly of inner membrane protein complexes. Participates in the regulation of mitochondrial gene expression and in the maintenance of the integrity of the mitochondrial genome. Binds to mitochondrial promoters and RNA in a single-stranded, site-specific, and strand-specific manner. May regulate mitochondrial DNA replication and/or gene expression using site-specific, single-stranded DNA binding to target the degradation of regulatory proteins binding to adjacent sites in mitochondrial promoters. This Rattus norvegicus (Rat) protein is Lon protease homolog, mitochondrial (Lonp1).